The following is a 653-amino-acid chain: 2-oxoglutarate oxidoreductase subunit KorA (653 aa).

Residues 1 to 21 (MDPNGSGAGPESHDAAFHAAP) are disordered. Over residues 11 to 21 (ESHDAAFHAAP) the composition is skewed to basic and acidic residues.

In terms of assembly, KG oxidoreductase (KOR) is composed of KorA and KorB subunits.

It carries out the reaction 2 oxidized [2Fe-2S]-[ferredoxin] + 2-oxoglutarate + CoA = succinyl-CoA + 2 reduced [2Fe-2S]-[ferredoxin] + CO2 + H(+). The protein operates within carbohydrate metabolism; tricarboxylic acid cycle. In terms of biological role, component of KG oxidoreductase (KOR) that catalyzes the CoA-dependent oxidative decarboxylation of 2-oxoglutarate (alpha-ketoglutarate, KG) to succinyl-CoA. Methyl viologen can act as electron acceptor in vitro; the physiologic electron acceptor is unknown. Is involved in the alternative TCA pathway that functions concurrently with fatty acid beta-oxidation. Since a growing body of evidence indicates that lipids (for example cholesterol and fatty acids) are a predominant growth substrate for M.tuberculosis during infection, flux through KOR likely represents an important step in intermediary metabolism in vivo. KOR-dependent decarboxylation of KG also appears to be an important source of CO(2) in M.tuberculosis metabolism. The sequence is that of 2-oxoglutarate oxidoreductase subunit KorA (korA) from Mycobacterium tuberculosis (strain ATCC 25618 / H37Rv).